Here is a 223-residue protein sequence, read N- to C-terminus: Neurotrophic factor BDNF precursor form (223 aa).

The signal sequence occupies residues 1 to 5 (SCMKA). Residues 6–114 (APMKEVSIRG…AANMSMRVRR (109 aa)) constitute a propeptide that is removed on maturation. Residue N107 is glycosylated (N-linked (GlcNAc...) asparagine). 2 cysteine pairs are disulfide-bonded: C127–C194 and C172–C223.

It belongs to the NGF-beta family.

The protein resides in the secreted. Functionally, promotes the survival of neuronal populations that are all located either in the central nervous system or directly connected to it. This Exiliboa placata (Oaxacan dwarf boa) protein is Neurotrophic factor BDNF precursor form (BDNF).